A 323-amino-acid chain; its full sequence is Ankyrin repeat and SOCS box protein 11 (323 aa).

6 ANK repeats span residues 64 to 93 (ADRSPLHEAAAQGRLLALKTLIAQGVNVNL), 97 to 126 (NRVSSLHEACLGGHVACAKALLENGAHVNG), 130 to 159 (HGATPLFNACCSGSAACVNVLLEFGAKAQL), 162 to 191 (HLASPIHEAVKRGNRECMEILLANNVNIDQ), 195 to 224 (HLGTPLYAACTYQRLDCVKKLLELGANVNH), and 227 to 256 (WLDTPLHAAAKQNSVEIIHLLIDYGANLKC). An SOCS box domain is found at 273 to 323 (SVEQALLLREGPPALSQLCRLCVRKCLGRNCHKTIHKLYLPDPLEKFLLYQ).

It belongs to the ankyrin SOCS box (ASB) family. As to quaternary structure, substrate-recognition component of the ECS(ASB11) complex, composed of ASB11, CUL5, ELOB, ELOC and RNF7/RBX2.

It localises to the endoplasmic reticulum. It participates in protein modification; protein ubiquitination. Its function is as follows. Substrate-recognition component of a cullin-5-RING E3 ubiquitin-protein ligase complex (ECS complex, also named CRL5 complex), which mediates the ubiquitination and subsequent proteasomal degradation of target proteins, such as BIK, DIRAS2 and RPN1. The ECS(ASB11) complex acts as a regulator of the endoplasmic reticulum unfolded protein response by mediating ubiquitination and degradation of BIK. The protein is Ankyrin repeat and SOCS box protein 11 (ASB11) of Bos taurus (Bovine).